The chain runs to 126 residues: Topoisomerase I damage affected protein 2 (126 aa).

S2 is subject to N-acetylserine.

This sequence belongs to the TDA2 family.

It is found in the cytoplasm. The protein localises to the cell projection. The sequence is that of Topoisomerase I damage affected protein 2 (TDA2) from Saccharomyces cerevisiae (strain JAY291) (Baker's yeast).